The following is a 149-amino-acid chain: Calmodulin (149 aa).

The residue at position 2 (Ala2) is an N-acetylalanine. EF-hand domains are found at residues 8 to 43 (EQIA…LGQN), 44 to 79 (PTEA…KMKD), 81 to 116 (DSEE…LGEK), and 117 to 149 (LSED…MMSK). Residues Asp21, Asp23, Asp25, Thr27, Glu32, Asp57, Asp59, Asn61, Thr63, Glu68, Asp94, Asp96, Asn98, Tyr100, Glu105, Asp130, Asp132, Asp134, Gln136, and Glu141 each coordinate Ca(2+).

This sequence belongs to the calmodulin family.

Calmodulin mediates the control of a large number of enzymes, ion channels and other proteins by Ca(2+). Among the enzymes to be stimulated by the calmodulin-Ca(2+) complex are a number of protein kinases and phosphatases. The polypeptide is Calmodulin (CMD1) (Blastocladiella emersonii (Aquatic fungus)).